The chain runs to 524 residues: Solute carrier family 35 member F5 (524 aa).

Positions 1–22 are disordered; the sequence is MVPPRHHPGAGRPGALSSSPPF. Low complexity predominate over residues 13–22; it reads PGALSSSPPF. 2 consecutive transmembrane segments (helical) span residues 69-89 and 101-121; these read MALG…SSEL and FFST…FIVW. Residue S207 is modified to Phosphoserine. 8 consecutive transmembrane segments (helical) span residues 244–264, 269–289, 297–317, 328–348, 362–382, 396–416, 421–441, and 453–473; these read ISFF…EALS, AIVN…AAMF, FTLS…LVNL, TIGS…IVMI, MFFG…FFLL, VVLM…EFLW, FLTS…LSII, and WLFF…TLLC. Residues 253 to 317 enclose the EamA domain; sequence FLANFSYQEA…SIGGVVLVNL (65 aa).

It belongs to the SLC35F solute transporter family.

It localises to the membrane. Its function is as follows. Putative solute transporter. In Bos taurus (Bovine), this protein is Solute carrier family 35 member F5 (SLC35F5).